The following is a 414-amino-acid chain: Tryptophan synthase beta chain (414 aa).

Lys109 is modified (N6-(pyridoxal phosphate)lysine).

The protein belongs to the TrpB family. Tetramer of two alpha and two beta chains. Requires pyridoxal 5'-phosphate as cofactor.

It carries out the reaction (1S,2R)-1-C-(indol-3-yl)glycerol 3-phosphate + L-serine = D-glyceraldehyde 3-phosphate + L-tryptophan + H2O. It participates in amino-acid biosynthesis; L-tryptophan biosynthesis; L-tryptophan from chorismate: step 5/5. Its function is as follows. The beta subunit is responsible for the synthesis of L-tryptophan from indole and L-serine. The polypeptide is Tryptophan synthase beta chain (Prochlorococcus marinus (strain AS9601)).